The following is a 183-amino-acid chain: Ribulose bisphosphate carboxylase small subunit, chloroplastic 5 (183 aa).

The N-terminal 42 residues, 1–42 (MAAAMMNKSVLLNKQCGKPAAVPKVVMSKGGFARTSAVNKNR), are a transit peptide targeting the chloroplast.

This sequence belongs to the RuBisCO small chain family. As to quaternary structure, heterohexadecamer of 8 large and 8 small subunits.

Its subcellular location is the plastid. It localises to the chloroplast. RuBisCO catalyzes two reactions: the carboxylation of D-ribulose 1,5-bisphosphate, the primary event in carbon dioxide fixation, as well as the oxidative fragmentation of the pentose substrate. Both reactions occur simultaneously and in competition at the same active site. Although the small subunit is not catalytic it is essential for maximal activity. In Acetabularia acetabulum (Mermaid's wine glass), this protein is Ribulose bisphosphate carboxylase small subunit, chloroplastic 5.